A 457-amino-acid chain; its full sequence is Exodeoxyribonuclease 7 large subunit (457 aa).

It belongs to the XseA family. As to quaternary structure, heterooligomer composed of large and small subunits.

The protein resides in the cytoplasm. It carries out the reaction Exonucleolytic cleavage in either 5'- to 3'- or 3'- to 5'-direction to yield nucleoside 5'-phosphates.. Its function is as follows. Bidirectionally degrades single-stranded DNA into large acid-insoluble oligonucleotides, which are then degraded further into small acid-soluble oligonucleotides. The sequence is that of Exodeoxyribonuclease 7 large subunit from Citrobacter koseri (strain ATCC BAA-895 / CDC 4225-83 / SGSC4696).